The sequence spans 838 residues: Protein translocase subunit SecA (838 aa).

ATP is bound by residues Gln-87, 105–109 (GEGKT), and Asp-494. Basic and acidic residues-rich tracts occupy residues 781–790 (EQEFQHKDET) and 803–819 (EDAKKEPKRREAPKVGR). The interval 781-838 (EQEFQHKDETANVQYSGPAESAEDAKKEPKRREAPKVGRNDPCPCGSGKKYKKCHGAK) is disordered. 4 residues coordinate Zn(2+): Cys-823, Cys-825, Cys-834, and His-835. Residues 829–838 (KKYKKCHGAK) show a composition bias toward basic residues.

The protein belongs to the SecA family. In terms of assembly, monomer and homodimer. Part of the essential Sec protein translocation apparatus which comprises SecA, SecYEG and auxiliary proteins SecDF-YajC and YidC. The cofactor is Zn(2+).

It localises to the cell inner membrane. The protein localises to the cytoplasm. It catalyses the reaction ATP + H2O + cellular proteinSide 1 = ADP + phosphate + cellular proteinSide 2.. Functionally, part of the Sec protein translocase complex. Interacts with the SecYEG preprotein conducting channel. Has a central role in coupling the hydrolysis of ATP to the transfer of proteins into and across the cell membrane, serving as an ATP-driven molecular motor driving the stepwise translocation of polypeptide chains across the membrane. This is Protein translocase subunit SecA from Solidesulfovibrio magneticus (strain ATCC 700980 / DSM 13731 / RS-1) (Desulfovibrio magneticus).